Here is a 316-residue protein sequence, read N- to C-terminus: L-lactate dehydrogenase 3 (316 aa).

Positions 16, 37, 42, and 68 each coordinate NAD(+). R91 lines the substrate pocket. NAD(+) is bound by residues S104, 121 to 123, and T146; that span reads ASN. 123 to 126 is a substrate binding site; sequence NPVD. Position 151–154 (151–154) interacts with substrate; the sequence is DSSR. R156 and H171 together coordinate beta-D-fructose 1,6-bisphosphate. Catalysis depends on H178, which acts as the Proton acceptor. Residue T233 participates in substrate binding.

Belongs to the LDH/MDH superfamily. LDH family. As to quaternary structure, homotetramer.

It is found in the cytoplasm. The catalysed reaction is (S)-lactate + NAD(+) = pyruvate + NADH + H(+). The protein operates within fermentation; pyruvate fermentation to lactate; (S)-lactate from pyruvate: step 1/1. With respect to regulation, allosterically activated by fructose 1,6-bisphosphate (FBP). Functionally, catalyzes the conversion of lactate to pyruvate. In Bacillus anthracis, this protein is L-lactate dehydrogenase 3.